The following is a 320-amino-acid chain: uncharacterized protein (320 aa).

The 120-residue stretch at 13–132 (ALVLKSLLRE…VLYPEIPSPE (120 aa)) folds into the Arf-GAP domain. A C4-type zinc finger spans residues 28–52 (CADCKRNEQPRWASWNLGVFICIRC). 3 disordered regions span residues 153–212 (NTAS…STRQ), 227–261 (RPQVSSSSITTNATYQNLPSPVSTSTTSSQPYGAF), and 284–320 (NVTSAQPSARASPVQSNSSRPRSSLDSKIINSHDVWK). Positions 154-176 (TASRSSSAHSVKSTSSATVTNVT) are enriched in low complexity. Composition is skewed to polar residues over residues 183–210 (SATTSLAQSSPNLASLSKQPSTVHAPST) and 228–244 (PQVSSSSITTNATYQNL). Low complexity-rich tracts occupy residues 245-257 (PSPVSTSTTSSQP) and 295-310 (SPVQSNSSRPRSSLDS).

Its subcellular location is the cytoplasm. It localises to the golgi apparatus. In terms of biological role, GTPase-activating protein for the ADP ribosylation factor family. This is an uncharacterized protein from Schizosaccharomyces pombe (strain 972 / ATCC 24843) (Fission yeast).